We begin with the raw amino-acid sequence, 422 residues long: Growth arrest-specific protein 7 (422 aa).

Residues 1–117 form a disordered region; the sequence is MATALQKPGM…SPGRKQSKEN (117 aa). One can recognise a WW domain in the interval 22–55; sequence VILPPGWHSYLSPQGRRYYVNTTTNETTWERPSS. Residues 41–52 show a composition bias toward polar residues; sequence VNTTTNETTWER. Residues 53–65 are compositionally biased toward low complexity; that stretch reads PSSSPGISASPGP. A phosphoserine mark is found at Ser62 and Ser108. Positions 95–117 are enriched in polar residues; the sequence is RKSTGDSQNLGSSSPGRKQSKEN. Residues 141-402 form the F-BAR domain; sequence TEWSYCDYFW…LLRKVDPAKD (262 aa). A coiled-coil region spans residues 254–329; that stretch reads ENFKKDMKKC…RKSTQAGDDL (76 aa).

The protein localises to the cytoplasm. In terms of biological role, may play a role in promoting maturation and morphological differentiation of cerebellar neurons. This chain is Growth arrest-specific protein 7 (Gas7), found in Rattus norvegicus (Rat).